The following is a 136-amino-acid chain: ATP synthase epsilon chain (136 aa).

This sequence belongs to the ATPase epsilon chain family. As to quaternary structure, F-type ATPases have 2 components, CF(1) - the catalytic core - and CF(0) - the membrane proton channel. CF(1) has five subunits: alpha(3), beta(3), gamma(1), delta(1), epsilon(1). CF(0) has three main subunits: a, b and c.

It localises to the cell inner membrane. Its function is as follows. Produces ATP from ADP in the presence of a proton gradient across the membrane. The chain is ATP synthase epsilon chain from Afipia carboxidovorans (strain ATCC 49405 / DSM 1227 / KCTC 32145 / OM5) (Oligotropha carboxidovorans).